The primary structure comprises 320 residues: Cytochrome f (320 aa).

An N-terminal signal peptide occupies residues 1–35; it reads MQTRNAFSWLKKQITRSISVSLMIYILTRTSISSA. Heme-binding residues include Tyr-36, Cys-56, Cys-59, and His-60. Residues 286-306 traverse the membrane as a helical segment; the sequence is AQGLLFFLASVILAQIFLVLK.

This sequence belongs to the cytochrome f family. The 4 large subunits of the cytochrome b6-f complex are cytochrome b6, subunit IV (17 kDa polypeptide, petD), cytochrome f and the Rieske protein, while the 4 small subunits are PetG, PetL, PetM and PetN. The complex functions as a dimer. The cofactor is heme.

Its subcellular location is the plastid. It localises to the chloroplast thylakoid membrane. Functionally, component of the cytochrome b6-f complex, which mediates electron transfer between photosystem II (PSII) and photosystem I (PSI), cyclic electron flow around PSI, and state transitions. The polypeptide is Cytochrome f (Nicotiana tomentosiformis (Tobacco)).